Reading from the N-terminus, the 120-residue chain is Large-conductance mechanosensitive channel (120 aa).

2 helical membrane passes run 7–27 (EFAL…GAAF) and 64–84 (GLFI…FIFV).

This sequence belongs to the MscL family. As to quaternary structure, homopentamer.

Its subcellular location is the cell membrane. Channel that opens in response to stretch forces in the membrane lipid bilayer. May participate in the regulation of osmotic pressure changes within the cell. The chain is Large-conductance mechanosensitive channel from Staphylococcus aureus (strain Mu3 / ATCC 700698).